We begin with the raw amino-acid sequence, 146 residues long: Anti-sigma F factor (146 aa).

The protein belongs to the anti-sigma-factor family.

The enzyme catalyses L-seryl-[protein] + ATP = O-phospho-L-seryl-[protein] + ADP + H(+). The catalysed reaction is L-threonyl-[protein] + ATP = O-phospho-L-threonyl-[protein] + ADP + H(+). Functionally, binds to sigma F and blocks its ability to form an RNA polymerase holoenzyme (E-sigma F). Phosphorylates SpoIIAA on a serine residue. This phosphorylation may enable SpoIIAA to act as an anti-anti-sigma factor that counteracts SpoIIAB and thus releases sigma F from inhibition. The protein is Anti-sigma F factor of Geobacillus kaustophilus (strain HTA426).